A 178-amino-acid polypeptide reads, in one-letter code: Crossover junction endodeoxyribonuclease RuvC (178 aa).

Active-site residues include aspartate 7, glutamate 67, and aspartate 139. Positions 7, 67, and 139 each coordinate Mg(2+).

Belongs to the RuvC family. Homodimer which binds Holliday junction (HJ) DNA. The HJ becomes 2-fold symmetrical on binding to RuvC with unstacked arms; it has a different conformation from HJ DNA in complex with RuvA. In the full resolvosome a probable DNA-RuvA(4)-RuvB(12)-RuvC(2) complex forms which resolves the HJ. The cofactor is Mg(2+).

The protein localises to the cytoplasm. It carries out the reaction Endonucleolytic cleavage at a junction such as a reciprocal single-stranded crossover between two homologous DNA duplexes (Holliday junction).. Functionally, the RuvA-RuvB-RuvC complex processes Holliday junction (HJ) DNA during genetic recombination and DNA repair. Endonuclease that resolves HJ intermediates. Cleaves cruciform DNA by making single-stranded nicks across the HJ at symmetrical positions within the homologous arms, yielding a 5'-phosphate and a 3'-hydroxyl group; requires a central core of homology in the junction. The consensus cleavage sequence is 5'-(A/T)TT(C/G)-3'. Cleavage occurs on the 3'-side of the TT dinucleotide at the point of strand exchange. HJ branch migration catalyzed by RuvA-RuvB allows RuvC to scan DNA until it finds its consensus sequence, where it cleaves and resolves the cruciform DNA. This is Crossover junction endodeoxyribonuclease RuvC from Trichlorobacter lovleyi (strain ATCC BAA-1151 / DSM 17278 / SZ) (Geobacter lovleyi).